The chain runs to 368 residues: Chaperone protein DnaJ (368 aa).

The J domain maps to 5-69 (DYYEVLGVAR…NQRARYDQFG (65 aa)). The CR-type zinc finger occupies 125 to 207 (GVEKVITIPV…CRGAGRVRKN (83 aa)). Cysteine 138, cysteine 141, cysteine 155, cysteine 158, cysteine 181, cysteine 184, cysteine 195, and cysteine 198 together coordinate Zn(2+). CXXCXGXG motif repeat units follow at residues 138–145 (CGTCHGSG), 155–162 (CKRCGGSG), 181–188 (CSTCHGRG), and 195–202 (CETCRGAG).

The protein belongs to the DnaJ family. Homodimer. Zn(2+) is required as a cofactor.

Its subcellular location is the cytoplasm. Functionally, participates actively in the response to hyperosmotic and heat shock by preventing the aggregation of stress-denatured proteins and by disaggregating proteins, also in an autonomous, DnaK-independent fashion. Unfolded proteins bind initially to DnaJ; upon interaction with the DnaJ-bound protein, DnaK hydrolyzes its bound ATP, resulting in the formation of a stable complex. GrpE releases ADP from DnaK; ATP binding to DnaK triggers the release of the substrate protein, thus completing the reaction cycle. Several rounds of ATP-dependent interactions between DnaJ, DnaK and GrpE are required for fully efficient folding. Also involved, together with DnaK and GrpE, in the DNA replication of plasmids through activation of initiation proteins. The sequence is that of Chaperone protein DnaJ from Exiguobacterium sibiricum (strain DSM 17290 / CCUG 55495 / CIP 109462 / JCM 13490 / 255-15).